A 96-amino-acid polypeptide reads, in one-letter code: (4S)-4-hydroxy-5-phosphonooxypentane-2,3-dione isomerase (96 aa).

An ABM domain is found at 2–91 (HVTLVEINVH…MTGPRTKKVF (90 aa)).

This sequence belongs to the LsrG family. As to quaternary structure, homodimer.

The protein resides in the cytoplasm. The enzyme catalyses (2S)-2-hydroxy-3,4-dioxopentyl phosphate = 3-hydroxy-2,4-dioxopentyl phosphate. Involved in the degradation of phospho-AI-2, thereby terminating induction of the lsr operon and closing the AI-2 signaling cycle. Catalyzes the conversion of (4S)-4-hydroxy-5-phosphonooxypentane-2,3-dione (P-DPD) to 3-hydroxy-5-phosphonooxypentane-2,4-dione (P-HPD). This chain is (4S)-4-hydroxy-5-phosphonooxypentane-2,3-dione isomerase, found in Salmonella typhimurium (strain LT2 / SGSC1412 / ATCC 700720).